The primary structure comprises 570 residues: Glycine--tRNA ligase (570 aa).

Substrate contacts are provided by Arg-99 and Glu-165. ATP-binding positions include 197–199, 207–212, 324–325, and 443–446; these read RNE, LRLREF, EC, and GIDR. 212–216 contacts substrate; sequence FTQAE. 439-443 provides a ligand contact to substrate; sequence EPSFG.

Belongs to the class-II aminoacyl-tRNA synthetase family.

The protein resides in the cytoplasm. It catalyses the reaction tRNA(Gly) + glycine + ATP = glycyl-tRNA(Gly) + AMP + diphosphate. Functionally, catalyzes the attachment of glycine to tRNA(Gly). The chain is Glycine--tRNA ligase from Thermococcus kodakarensis (strain ATCC BAA-918 / JCM 12380 / KOD1) (Pyrococcus kodakaraensis (strain KOD1)).